Here is a 277-residue protein sequence, read N- to C-terminus: Shikimate dehydrogenase (NADP(+)) (277 aa).

Shikimate-binding positions include 14–16 (SKS) and Thr61. The active-site Proton acceptor is Lys65. Asp77 contributes to the NADP(+) binding site. Positions 86 and 102 each coordinate shikimate. NADP(+) contacts are provided by residues 127–131 (GAGGA), 151–156 (NRTPDK), and Met215. Shikimate is bound at residue Tyr217. Residue Gly239 coordinates NADP(+).

It belongs to the shikimate dehydrogenase family. Homodimer.

The catalysed reaction is shikimate + NADP(+) = 3-dehydroshikimate + NADPH + H(+). The protein operates within metabolic intermediate biosynthesis; chorismate biosynthesis; chorismate from D-erythrose 4-phosphate and phosphoenolpyruvate: step 4/7. In terms of biological role, involved in the biosynthesis of the chorismate, which leads to the biosynthesis of aromatic amino acids. Catalyzes the reversible NADPH linked reduction of 3-dehydroshikimate (DHSA) to yield shikimate (SA). This Nitrosomonas eutropha (strain DSM 101675 / C91 / Nm57) protein is Shikimate dehydrogenase (NADP(+)).